The sequence spans 295 residues: Universal stress protein Mb2028c (295 aa).

Residues Gly-13, Gly-117–Ala-123, Ser-131–Val-132, Gly-165, Asp-198, Gly-262–Gly-268, and Ser-276–Ser-278 contribute to the ATP site.

The protein belongs to the universal stress protein A family.

In Mycobacterium bovis (strain ATCC BAA-935 / AF2122/97), this protein is Universal stress protein Mb2028c.